Reading from the N-terminus, the 277-residue chain is Digeranylgeranylglyceryl phosphate synthase (277 aa).

7 consecutive transmembrane segments (helical) span residues 13–33, 40–60, 89–109, 143–163, 199–219, 220–240, and 256–276; these read PGNAVAAGGLTFIGAFVAGGL, AFAVVATVLATGAGNAINDYF, VALFAVAVVLTLLLPWLAIAI, FLYGGAAVGGDLAAVVVLFAL, RSLYVAAGFVVVAVLSSPLPY, LLGLFGWVYLVVLVPALCGLA, and WLKASMFAAAVAFVIGRLAVV.

Belongs to the UbiA prenyltransferase family. DGGGP synthase subfamily. Requires Mg(2+) as cofactor.

It localises to the cell membrane. It catalyses the reaction sn-3-O-(geranylgeranyl)glycerol 1-phosphate + (2E,6E,10E)-geranylgeranyl diphosphate = 2,3-bis-O-(geranylgeranyl)-sn-glycerol 1-phosphate + diphosphate. It participates in membrane lipid metabolism; glycerophospholipid metabolism. Its function is as follows. Prenyltransferase that catalyzes the transfer of the geranylgeranyl moiety of geranylgeranyl diphosphate (GGPP) to the C2 hydroxyl of (S)-3-O-geranylgeranylglyceryl phosphate (GGGP). This reaction is the second ether-bond-formation step in the biosynthesis of archaeal membrane lipids. This Natronomonas pharaonis (strain ATCC 35678 / DSM 2160 / CIP 103997 / JCM 8858 / NBRC 14720 / NCIMB 2260 / Gabara) (Halobacterium pharaonis) protein is Digeranylgeranylglyceryl phosphate synthase.